The primary structure comprises 452 residues: MLTRGEEKNMSKTIHFIGIKGSGMSALALLLHQMGYKVQGSDVDKYYFTQHGLEKAGIPILPFAESNITNDMEIIAGNAFRKDNNIEVAYALENGYHFKRYHEFLGEFMNQFTSLGVAGAHGKTSTTGLLAHVLKNITDTSYLIGDGTGRGLANSQYFVFESDEYERHFMPYHPEYSIITNIDFDHPDYFTGVDDVFAAFNDYAKQVKKGLFVYGEDPYLRKLTSSAPIYYYGFKDNDDFVAYDIMRSTNGSDFKVRHGQNELGSFHVPAFGRHNVLNATAVIANLYIAGVEMDLVRQHLKTFSGVKRRFSEKLINDVTIIDDFAHHPTEIIATLDAARQKYPSKEIVAIFQPHTFTRTIALLDEFAQALNEADSVYLAQIYGSAREVDHGDVKVEDLADKIVKPAKVITVDNVSPLLDHHNAVYVFMGAGDIQLYERSFEELLSNLTKNTR.

Residue 119–125 (GAHGKTS) coordinates ATP.

The protein belongs to the MurCDEF family.

The protein resides in the cytoplasm. The catalysed reaction is UDP-N-acetyl-alpha-D-muramate + L-alanine + ATP = UDP-N-acetyl-alpha-D-muramoyl-L-alanine + ADP + phosphate + H(+). It functions in the pathway cell wall biogenesis; peptidoglycan biosynthesis. Its function is as follows. Cell wall formation. The polypeptide is UDP-N-acetylmuramate--L-alanine ligase (Streptococcus mutans serotype c (strain ATCC 700610 / UA159)).